Reading from the N-terminus, the 148-residue chain is 3-dehydroquinate dehydratase (148 aa).

Catalysis depends on Tyr23, which acts as the Proton acceptor. Substrate contacts are provided by Asn75, His81, and Asp88. Residue His101 is the Proton donor of the active site. Residues Met102–Ser103 and Arg112 each bind substrate.

Belongs to the type-II 3-dehydroquinase family. Homododecamer.

The enzyme catalyses 3-dehydroquinate = 3-dehydroshikimate + H2O. It participates in metabolic intermediate biosynthesis; chorismate biosynthesis; chorismate from D-erythrose 4-phosphate and phosphoenolpyruvate: step 3/7. In terms of biological role, catalyzes a trans-dehydration via an enolate intermediate. The chain is 3-dehydroquinate dehydratase from Syntrophotalea carbinolica (strain DSM 2380 / NBRC 103641 / GraBd1) (Pelobacter carbinolicus).